Here is a 100-residue protein sequence, read N- to C-terminus: Urease subunit gamma (100 aa).

It belongs to the urease gamma subunit family. As to quaternary structure, heterotrimer of UreA (gamma), UreB (beta) and UreC (alpha) subunits. Three heterotrimers associate to form the active enzyme.

It localises to the cytoplasm. It catalyses the reaction urea + 2 H2O + H(+) = hydrogencarbonate + 2 NH4(+). The protein operates within nitrogen metabolism; urea degradation; CO(2) and NH(3) from urea (urease route): step 1/1. This chain is Urease subunit gamma, found in Azoarcus sp. (strain BH72).